Consider the following 277-residue polypeptide: Coiled-coil domain-containing protein 117 (277 aa).

The interval 1–69 (MAALGRPFSG…GRVSIHCRKK (69 aa)) is disordered. Positions 26–37 (FAGRAFPPGAAG) are enriched in low complexity. Omega-N-methylarginine is present on Arg-47. The residue at position 52 (Ser-52) is a Phosphoserine. Residues 58–69 (ARGRVSIHCRKK) are compositionally biased toward basic residues. Residues 139-166 (QCEVARRRLQEIEDRIIDEDEEVESDRN) adopt a coiled-coil conformation. Positions 212–277 (LPELLPEKPK…ATSTEEEMEL (66 aa)) are disordered.

As to quaternary structure, interacts with CIAO2B; the interaction is direct. Interacts with MMS19; the interaction is indirect.

It localises to the cytoplasm. The protein localises to the cytoskeleton. Its subcellular location is the spindle. The protein resides in the nucleus. In terms of biological role, facilitates DNA repair, cell cycle progression, and cell proliferation through its interaction with CIAO2B. The protein is Coiled-coil domain-containing protein 117 of Mus musculus (Mouse).